A 307-amino-acid polypeptide reads, in one-letter code: UDP-N-acetylenolpyruvoylglucosamine reductase (307 aa).

The FAD-binding PCMH-type domain maps to 27 to 193; it reads RVGGPADVVF…LDAVFEGLAD (167 aa). Residue arginine 172 is part of the active site. The active-site Proton donor is the serine 222. Glutamate 299 is a catalytic residue.

The protein belongs to the MurB family. It depends on FAD as a cofactor.

Its subcellular location is the cytoplasm. It carries out the reaction UDP-N-acetyl-alpha-D-muramate + NADP(+) = UDP-N-acetyl-3-O-(1-carboxyvinyl)-alpha-D-glucosamine + NADPH + H(+). The protein operates within cell wall biogenesis; peptidoglycan biosynthesis. Cell wall formation. In Caulobacter sp. (strain K31), this protein is UDP-N-acetylenolpyruvoylglucosamine reductase.